The chain runs to 365 residues: Flagellar P-ring protein (365 aa).

Residues 1 to 19 (MIKFLSTFMLLLVTTVVQA) form the signal peptide.

This sequence belongs to the FlgI family. In terms of assembly, the basal body constitutes a major portion of the flagellar organelle and consists of four rings (L,P,S, and M) mounted on a central rod.

Its subcellular location is the periplasm. It localises to the bacterial flagellum basal body. Its function is as follows. Assembles around the rod to form the L-ring and probably protects the motor/basal body from shearing forces during rotation. In Escherichia fergusonii (strain ATCC 35469 / DSM 13698 / CCUG 18766 / IAM 14443 / JCM 21226 / LMG 7866 / NBRC 102419 / NCTC 12128 / CDC 0568-73), this protein is Flagellar P-ring protein.